Reading from the N-terminus, the 331-residue chain is UPF0324 membrane protein YdhF (331 aa).

Transmembrane regions (helical) follow at residues 2-20 (SILP…SYLL), 24-46 (IFHS…NLYF), 82-104 (LGFS…VLFM), 114-136 (VSAL…VEPV), 148-170 (IAMV…TWMF), 204-226 (TLAT…YFGF), 247-269 (SFLP…IHFV), and 308-330 (LIYG…SLLI).

Belongs to the UPF0324 family.

The protein localises to the cell membrane. The protein is UPF0324 membrane protein YdhF (ydhF) of Lactococcus lactis subsp. lactis (strain IL1403) (Streptococcus lactis).